We begin with the raw amino-acid sequence, 596 residues long: Phosphoenolpyruvate carboxykinase [GTP] (596 aa).

Substrate-binding positions include Arg77 and 205-207 (YGG). 2 residues coordinate Mn(2+): Lys214 and His234. Substrate is bound at residue Ser256. A GTP-binding site is contributed by 257 to 262 (ACGKTN). Cys258 is a catalytic residue. Asp283 provides a ligand contact to Mn(2+). The segment at 362 to 388 (KKGSTEKAAHPNSRFTAPAKNNPAISP) is disordered. 373 to 375 (NSR) contacts substrate. GTP is bound by residues Arg375, Arg406, and 499 to 502 (YGDN).

Belongs to the phosphoenolpyruvate carboxykinase [GTP] family. As to quaternary structure, monomer. Requires Mn(2+) as cofactor.

It localises to the cytoplasm. It catalyses the reaction oxaloacetate + GTP = phosphoenolpyruvate + GDP + CO2. It functions in the pathway carbohydrate biosynthesis; gluconeogenesis. In terms of biological role, catalyzes the conversion of oxaloacetate (OAA) to phosphoenolpyruvate (PEP), the rate-limiting step in the metabolic pathway that produces glucose from lactate and other precursors derived from the citric acid cycle. The sequence is that of Phosphoenolpyruvate carboxykinase [GTP] from Anaeromyxobacter dehalogenans (strain 2CP-C).